The following is a 511-amino-acid chain: 2-isopropylmalate synthase (511 aa).

The region spanning 5 to 267 (LIVFDTTLRD…DTRIDATQIV (263 aa)) is the Pyruvate carboxyltransferase domain. 4 residues coordinate Mn(2+): Asp-14, His-202, His-204, and Asn-238. Positions 393-511 (RLVASRFHSE…SKLERLNPQL (119 aa)) are regulatory domain.

Belongs to the alpha-IPM synthase/homocitrate synthase family. LeuA type 1 subfamily. In terms of assembly, homodimer. Mn(2+) is required as a cofactor.

Its subcellular location is the cytoplasm. It catalyses the reaction 3-methyl-2-oxobutanoate + acetyl-CoA + H2O = (2S)-2-isopropylmalate + CoA + H(+). Its pathway is amino-acid biosynthesis; L-leucine biosynthesis; L-leucine from 3-methyl-2-oxobutanoate: step 1/4. In terms of biological role, catalyzes the condensation of the acetyl group of acetyl-CoA with 3-methyl-2-oxobutanoate (2-ketoisovalerate) to form 3-carboxy-3-hydroxy-4-methylpentanoate (2-isopropylmalate). The sequence is that of 2-isopropylmalate synthase from Aromatoleum aromaticum (strain DSM 19018 / LMG 30748 / EbN1) (Azoarcus sp. (strain EbN1)).